The following is a 1108-amino-acid chain: Valine--tRNA ligase, mitochondrial 1 (1108 aa).

The transit peptide at 1 to 46 (MSLLFLRRAKPLFVSCCSATHSRSSFLSPTLTNQLVRSFHGSRTMS) directs the protein to the mitochondrion. The segment covering 57–93 (ELERKKKKEEKAKEKELKKQKALEKERLAELKAKQAK) has biased composition (basic and acidic residues). The tract at residues 57-138 (ELERKKKKEE…RKRLSSQMAK (82 aa)) is disordered. The 'HIGH' region signature appears at 177-187 (PNVTGALHIGH). The 'KMSKS' region motif lies at 695 to 699 (KMSKS). Lys698 is an ATP binding site. Positions 1032 to 1064 (AINTEAEQEKIRNKIGELQKQKEKLQKMMSVST) form a coiled coil.

The protein belongs to the class-I aminoacyl-tRNA synthetase family.

The protein localises to the mitochondrion. It is found in the cytoplasm. It localises to the cytosol. The enzyme catalyses tRNA(Val) + L-valine + ATP = L-valyl-tRNA(Val) + AMP + diphosphate. Its function is as follows. Required for embryo development and seed viability. The chain is Valine--tRNA ligase, mitochondrial 1 from Arabidopsis thaliana (Mouse-ear cress).